Here is a 101-residue protein sequence, read N- to C-terminus: Protein Tat (101 aa).

A disordered region spans residues 1-20; the sequence is MEPVDPSLEPWKHPGSQPKT. An interaction with human CREBBP region spans residues 1-24; that stretch reads MEPVDPSLEPWKHPGSQPKTACTN. A transactivation region spans residues 1-48; sequence MEPVDPSLEPWKHPGSQPKTACTNCYCKKCCLHCQVCFTTKGLGISYG. The Zn(2+) site is built by Cys-22, Cys-25, and Cys-27. Residues 22–37 are cysteine-rich; sequence CTNCYCKKCCLHCQVC. Position 28 is an N6-acetyllysine; by host PCAF (Lys-28). The Zn(2+) site is built by Cys-30, His-33, Cys-34, and Cys-37. The core stretch occupies residues 38-48; the sequence is FTTKGLGISYG. A disordered region spans residues 45–101; the sequence is ISYGRKKRRQRRRPPQDSQTHQVSLPKQPSSQQRGDPTGPKESKKKVERETETDPDN. The span at 48 to 57 shows a compositional bias: basic residues; the sequence is GRKKRRQRRR. Residues 49-57 carry the Nuclear localization signal, RNA-binding (TAR), and protein transduction motif; that stretch reads RKKRRQRRR. Residues 49-86 form an interaction with the host capping enzyme RNGTT region; sequence RKKRRQRRRPPQDSQTHQVSLPKQPSSQQRGDPTGPKE. Lys-50 and Lys-51 each carry N6-acetyllysine; by host EP300 and GCN5L2. Asymmetric dimethylarginine; by host PRMT6 is present on residues Arg-52 and Arg-53. The segment covering 61–79 has biased composition (polar residues); it reads DSQTHQVSLPKQPSSQQRG. Residue Lys-71 forms a Glycyl lysine isopeptide (Lys-Gly) (interchain with G-Cter in ubiquitin) linkage. The Cell attachment site motif lies at 78–80; that stretch reads RGD. The span at 83 to 101 shows a compositional bias: basic and acidic residues; sequence GPKESKKKVERETETDPDN.

The protein belongs to the lentiviruses Tat family. As to quaternary structure, interacts with host CCNT1. Associates with the P-TEFb complex composed at least of Tat, P-TEFb (CDK9 and CCNT1), TAR RNA, RNA Pol II. Recruits the HATs CREBBP, TAF1/TFIID, EP300, PCAF and GCN5L2. Interacts with host KAT5/Tip60; this interaction targets the latter to degradation. Interacts with the host deacetylase SIRT1. Interacts with host capping enzyme RNGTT; this interaction stimulates RNGTT. Binds to host KDR, and to the host integrins ITGAV/ITGB3 and ITGA5/ITGB1. Interacts with host KPNB1/importin beta-1 without previous binding to KPNA1/importin alpha-1. Interacts with EIF2AK2. Interacts with host nucleosome assembly protein NAP1L1; this interaction may be required for the transport of Tat within the nucleus, since the two proteins interact at the nuclear rim. Interacts with host C1QBP/SF2P32; this interaction involves lysine-acetylated Tat. Interacts with the host chemokine receptors CCR2, CCR3 and CXCR4. Interacts with host DPP4/CD26; this interaction may trigger an anti-proliferative effect. Interacts with host LDLR. Interacts with the host extracellular matrix metalloproteinase MMP1. Interacts with host PRMT6; this interaction mediates Tat's methylation. Interacts with, and is ubiquitinated by MDM2/Hdm2. Interacts with host PSMC3 and HTATIP2. Interacts with STAB1; this interaction may overcome SATB1-mediated repression of IL2 and IL2RA (interleukin) in T cells by binding to the same domain than HDAC1. Interacts (when acetylated) with human CDK13, thereby increasing HIV-1 mRNA splicing and promoting the production of the doubly spliced HIV-1 protein Nef. Interacts with host TBP; this interaction modulates the activity of transcriptional pre-initiation complex. Interacts with host RELA. Interacts with host PLSCR1; this interaction negatively regulates Tat transactivation activity by altering its subcellular distribution. In terms of processing, asymmetrical arginine methylation by host PRMT6 seems to diminish the transactivation capacity of Tat and affects the interaction with host CCNT1. Acetylation by EP300, CREBBP, GCN5L2/GCN5 and PCAF regulates the transactivation activity of Tat. EP300-mediated acetylation of Lys-50 promotes dissociation of Tat from the TAR RNA through the competitive binding to PCAF's bromodomain. In addition, the non-acetylated Tat's N-terminus can also interact with PCAF. PCAF-mediated acetylation of Lys-28 enhances Tat's binding to CCNT1. Lys-50 is deacetylated by SIRT1. Post-translationally, polyubiquitination by host MDM2 does not target Tat to degradation, but activates its transactivation function and fosters interaction with CCNT1 and TAR RNA. In terms of processing, phosphorylated by EIF2AK2 on serine and threonine residues adjacent to the basic region important for TAR RNA binding and function. Phosphorylation of Tat by EIF2AK2 is dependent on the prior activation of EIF2AK2 by dsRNA.

The protein localises to the host nucleus. Its subcellular location is the host nucleolus. The protein resides in the host cytoplasm. It is found in the secreted. In terms of biological role, transcriptional activator that increases RNA Pol II processivity, thereby increasing the level of full-length viral transcripts. Recognizes a hairpin structure at the 5'-LTR of the nascent viral mRNAs referred to as the transactivation responsive RNA element (TAR) and recruits the cyclin T1-CDK9 complex (P-TEFb complex) that will in turn hyperphosphorylate the RNA polymerase II to allow efficient elongation. The CDK9 component of P-TEFb and other Tat-activated kinases hyperphosphorylate the C-terminus of RNA Pol II that becomes stabilized and much more processive. Other factors such as HTATSF1/Tat-SF1, SUPT5H/SPT5, and HTATIP2 are also important for Tat's function. Besides its effect on RNA Pol II processivity, Tat induces chromatin remodeling of proviral genes by recruiting the histone acetyltransferases (HATs) CREBBP, EP300 and PCAF to the chromatin. This also contributes to the increase in proviral transcription rate, especially when the provirus integrates in transcriptionally silent region of the host genome. To ensure maximal activation of the LTR, Tat mediates nuclear translocation of NF-kappa-B by interacting with host RELA. Through its interaction with host TBP, Tat may also modulate transcription initiation. Tat can reactivate a latently infected cell by penetrating in it and transactivating its LTR promoter. In the cytoplasm, Tat is thought to act as a translational activator of HIV-1 mRNAs. Its function is as follows. Extracellular circulating Tat can be endocytosed by surrounding uninfected cells via the binding to several surface receptors such as CD26, CXCR4, heparan sulfate proteoglycans (HSPG) or LDLR. Neurons are rarely infected, but they internalize Tat via their LDLR. Through its interaction with nuclear HATs, Tat is potentially able to control the acetylation-dependent cellular gene expression. Modulates the expression of many cellular genes involved in cell survival, proliferation or in coding for cytokines or cytokine receptors. Tat plays a role in T-cell and neurons apoptosis. Tat induced neurotoxicity and apoptosis probably contribute to neuroAIDS. Circulating Tat also acts as a chemokine-like and/or growth factor-like molecule that binds to specific receptors on the surface of the cells, affecting many cellular pathways. In the vascular system, Tat binds to ITGAV/ITGB3 and ITGA5/ITGB1 integrins dimers at the surface of endothelial cells and competes with bFGF for heparin-binding sites, leading to an excess of soluble bFGF. This is Protein Tat from Homo sapiens (Human).